We begin with the raw amino-acid sequence, 313 residues long: Protein MFI (313 aa).

In terms of assembly, can homodimerize. Interacts with MFF; the interaction inhibits MFF interaction with DNM1L. As to expression, enriched in the pancreatic beta cell and the testis and is expressed at low levels in other tissues tested.

The protein localises to the cytoplasm. It is found in the cytosol. It localises to the mitochondrion outer membrane. Functionally, acts as an inhibitor of mitochondrial fission. Interacts with MFF and prevents DNM1L recruitment to mitochondria, promoting a more fused mitochondrial network. This chain is Protein MFI, found in Homo sapiens (Human).